Consider the following 570-residue polypeptide: Proline--tRNA ligase (570 aa).

The protein belongs to the class-II aminoacyl-tRNA synthetase family. ProS type 1 subfamily. Homodimer.

The protein resides in the cytoplasm. The catalysed reaction is tRNA(Pro) + L-proline + ATP = L-prolyl-tRNA(Pro) + AMP + diphosphate. Functionally, catalyzes the attachment of proline to tRNA(Pro) in a two-step reaction: proline is first activated by ATP to form Pro-AMP and then transferred to the acceptor end of tRNA(Pro). As ProRS can inadvertently accommodate and process non-cognate amino acids such as alanine and cysteine, to avoid such errors it has two additional distinct editing activities against alanine. One activity is designated as 'pretransfer' editing and involves the tRNA(Pro)-independent hydrolysis of activated Ala-AMP. The other activity is designated 'posttransfer' editing and involves deacylation of mischarged Ala-tRNA(Pro). The misacylated Cys-tRNA(Pro) is not edited by ProRS. The chain is Proline--tRNA ligase from Shewanella sp. (strain MR-4).